The chain runs to 465 residues: tRNA (guanine(37)-N(1))-methyltransferase (465 aa).

Residues 1 to 20 (MDKNSQLRDMNLFRAPAARA) constitute a mitochondrion transit peptide. S-adenosyl-L-methionine is bound by residues His-238 and 304–305 (DG). Residues 326–345 (AVIKPPRPPRKSAAPPPEPV) are disordered. Asn-359 lines the S-adenosyl-L-methionine pocket.

Belongs to the class I-like SAM-binding methyltransferase superfamily. TRM5/TYW2 family. In terms of assembly, monomer.

It localises to the mitochondrion matrix. The protein resides in the nucleus. The protein localises to the cytoplasm. The catalysed reaction is guanosine(37) in tRNA + S-adenosyl-L-methionine = N(1)-methylguanosine(37) in tRNA + S-adenosyl-L-homocysteine + H(+). In terms of biological role, specifically methylates the N1 position of guanosine-37 in various cytoplasmic and mitochondrial tRNAs. Methylation is not dependent on the nature of the nucleoside 5' of the target nucleoside. This is the first step in the biosynthesis of wybutosine (yW), a modified base adjacent to the anticodon of tRNAs and required for accurate decoding. The protein is tRNA (guanine(37)-N(1))-methyltransferase of Fusarium vanettenii (strain ATCC MYA-4622 / CBS 123669 / FGSC 9596 / NRRL 45880 / 77-13-4) (Fusarium solani subsp. pisi).